Reading from the N-terminus, the 501-residue chain is GDP-fucose protein O-fucosyltransferase 4 (501 aa).

Residues 1 to 10 (MLLQMAGRGK) lie on the Cytoplasmic side of the membrane. Residues 11 to 31 (MVPCVCLGLLGVLCWVWVSFA) form a helical; Signal-anchor for type II membrane protein membrane-spanning segment. The Lumenal portion of the chain corresponds to 32–501 (SFPDEQLSLG…MAVRRARGKN (470 aa)). N-linked (GlcNAc...) asparagine glycosylation occurs at N173. C396 and C399 are disulfide-bonded. N428 and N478 each carry an N-linked (GlcNAc...) asparagine glycan.

It belongs to the glycosyltransferase 10 family.

The protein resides in the endoplasmic reticulum membrane. It catalyses the reaction L-threonyl-[protein] + GDP-beta-L-fucose = 3-O-(alpha-L-fucosyl)-L-threonyl-[protein] + GDP + H(+). It carries out the reaction L-seryl-[protein] + GDP-beta-L-fucose = 3-O-(alpha-L-fucosyl)-L-seryl-[protein] + GDP + H(+). It functions in the pathway protein modification; protein glycosylation. Its function is as follows. Protein O-fucosyltransferase that specifically catalyzes O-fucosylation of serine or threonine residues in EMI domains of target proteins. Attaches fucose through an O-glycosidic linkage. O-fucosylation of EMI domain-containing proteins may be required for facilitating protein folding and secretion. This chain is GDP-fucose protein O-fucosyltransferase 4 (fut11), found in Takifugu rubripes (Japanese pufferfish).